A 219-amino-acid polypeptide reads, in one-letter code: Chloramphenicol acetyltransferase (219 aa).

The Proton acceptor role is filled by His190.

This sequence belongs to the chloramphenicol acetyltransferase family. As to quaternary structure, homotrimer.

It catalyses the reaction chloramphenicol + acetyl-CoA = chloramphenicol 3-acetate + CoA. Its function is as follows. This enzyme is an effector of chloramphenicol resistance in bacteria. The chain is Chloramphenicol acetyltransferase (catB) from Clostridium butyricum.